Here is a 134-residue protein sequence, read N- to C-terminus: Large ribosomal subunit protein uL16c (134 aa).

Basic residues predominate over residues 1–17; that stretch reads MLSPKRTRFRKQHRGRM. Residues 1–22 form a disordered region; it reads MLSPKRTRFRKQHRGRMKGISS.

This sequence belongs to the universal ribosomal protein uL16 family. As to quaternary structure, part of the 50S ribosomal subunit.

Its subcellular location is the plastid. The protein resides in the chloroplast. This chain is Large ribosomal subunit protein uL16c, found in Solanum tuberosum (Potato).